The sequence spans 905 residues: Lateral signaling target protein 2 homolog (905 aa).

Lys-87 is covalently cross-linked (Glycyl lysine isopeptide (Lys-Gly) (interchain with G-Cter in ubiquitin)). Ser-334 is subject to Phosphoserine. The tract at residues 354-441 is disordered; the sequence is DEMSSLLSPP…RGQDGQSGEV (88 aa). 2 stretches are compositionally biased toward polar residues: residues 358–367 and 418–437; these read SLLSPPSACQ and PGNT…QDGQ. Residue Thr-512 is modified to Phosphothreonine. 2 disordered regions span residues 516–552 and 589–691; these read NPKS…DNSH and PGSV…RGDV. Composition is skewed to basic and acidic residues over residues 542 to 552 and 605 to 615; these read PRAEGTGDNSH and GGDKEPERIDE. Over residues 647–656 the composition is skewed to polar residues; that stretch reads SGPQVDTASR. The span at 659-678 shows a compositional bias: basic and acidic residues; sequence GEGEVKGQPEPEARKQDPEK. Residues 835 to 895 form an FYVE-type zinc finger; sequence DEACGFCTSC…VCTHCYMFHV (61 aa). 7 residues coordinate Zn(2+): Cys-841, Cys-844, Cys-857, Cys-860, Cys-865, Cys-868, and Cys-887. Thr-888 is modified (phosphothreonine; by MAP2K). Cys-890 is a binding site for Zn(2+).

Belongs to the lst-2 family. Interacts with TRIM3. Post-translationally, monoubiquitination at Lys-87 prevents binding to phosphatidylinositol 3-phosphate (PI3P) and localization to early endosome membranes. As to expression, enriched in brain (at protein level).

It is found in the cytoplasm. The protein localises to the cytosol. Its subcellular location is the early endosome membrane. In terms of biological role, negative regulator of epidermal growth factor receptor (EGFR) signaling. Acts by promoting EGFR degradation in endosomes when not monoubiquitinated. The polypeptide is Lateral signaling target protein 2 homolog (Zfyve28) (Mus musculus (Mouse)).